The chain runs to 426 residues: Protein sum2 (426 aa).

Residues 1 to 80 (MTEFIGSRIS…VKDLRIEEPA (80 aa)) enclose the Sm domain. Disordered stretches follow at residues 79–100 (PATTPSAPPVQPPNDPAIIGSN), 204–305 (GMPS…AKPR), and 348–426 (SCES…ANDQ). The segment covering 84-93 (SAPPVQPPND) has biased composition (pro residues). The span at 226–237 (VSASPSLQSMPP) shows a compositional bias: polar residues. The span at 261 to 278 (RNSTVTNDRVVNTTVDVS) shows a compositional bias: low complexity. Over residues 279–298 (QSQTVETSGPSKEVPTTQPD) the composition is skewed to polar residues. The DFDF domain occupies 296–332 (QPDASAAKPRTEFDFQTANQKFQSMKDDLLKGKNDEE). An FFD box motif is present at residues 335 to 351 (EFYKPKQSFFDNISCES). Residues 350-371 (ESKEKGMEAADRRALRDRERSL) are compositionally biased toward basic and acidic residues. The TFG box signature appears at 360 to 380 (DRRALRDRERSLNMETFGVAG). The segment covering 384-401 (RGRRGRGRGRGGRGRGRG) has biased composition (basic residues). The segment covering 405–426 (NQYNQYRNSNGSQPRAQPANDQ) has biased composition (polar residues).

In terms of biological role, required for G2/M phase checkpoint control. In Schizosaccharomyces pombe (strain 972 / ATCC 24843) (Fission yeast), this protein is Protein sum2 (sum2).